Here is a 318-residue protein sequence, read N- to C-terminus: Methionyl-tRNA formyltransferase (318 aa).

112 to 115 contacts (6S)-5,6,7,8-tetrahydrofolate; it reads SILP.

This sequence belongs to the Fmt family.

It carries out the reaction L-methionyl-tRNA(fMet) + (6R)-10-formyltetrahydrofolate = N-formyl-L-methionyl-tRNA(fMet) + (6S)-5,6,7,8-tetrahydrofolate + H(+). In terms of biological role, attaches a formyl group to the free amino group of methionyl-tRNA(fMet). The formyl group appears to play a dual role in the initiator identity of N-formylmethionyl-tRNA by promoting its recognition by IF2 and preventing the misappropriation of this tRNA by the elongation apparatus. This chain is Methionyl-tRNA formyltransferase, found in Haemophilus influenzae (strain PittGG).